We begin with the raw amino-acid sequence, 513 residues long: Histidine ammonia-lyase (513 aa).

The segment at residues 142 to 144 is a cross-link (5-imidazolinone (Ala-Gly)); the sequence is ASG. Residue S143 is modified to 2,3-didehydroalanine (Ser).

It belongs to the PAL/histidase family. Post-translationally, contains an active site 4-methylidene-imidazol-5-one (MIO), which is formed autocatalytically by cyclization and dehydration of residues Ala-Ser-Gly.

It is found in the cytoplasm. It catalyses the reaction L-histidine = trans-urocanate + NH4(+). Its pathway is amino-acid degradation; L-histidine degradation into L-glutamate; N-formimidoyl-L-glutamate from L-histidine: step 1/3. In Mesorhizobium japonicum (strain LMG 29417 / CECT 9101 / MAFF 303099) (Mesorhizobium loti (strain MAFF 303099)), this protein is Histidine ammonia-lyase.